A 251-amino-acid polypeptide reads, in one-letter code: Protection of telomeres homolog 2 (251 aa).

The segment at Glu221–Gln251 is disordered.

It belongs to the telombin family.

It is found in the nucleus. The protein localises to the chromosome. Its subcellular location is the telomere. Functionally, telomeric DNA-binding protein, which binds to two or more single-stranded G-rich repeat sequences (G-strand), with high specificity to the 5'-TTAGGC-3' sequence. In addition, repeat sequence binding requires a 3' single-stranded telomeric overhang. Acts redundantly with pot-1 to negatively regulate telomerase-mediated telomere extension. Also regulates telomere length by the telomerase-independent telomere maintenance pathway called ALT (alternative lengthening of telomeres). Does not appear to have a role in anchoring telomeres to the nuclear envelope. This chain is Protection of telomeres homolog 2, found in Caenorhabditis elegans.